We begin with the raw amino-acid sequence, 962 residues long: Protocadherin gamma-A4 (962 aa).

Positions 1–24 (MHFILDPEDPGAPQASTEGKPKHR) are disordered. The N-terminal stretch at 1–59 (MHFILDPEDPGAPQASTEGKPKHRRLRGGVVMAAPPARPDHTRLLQICLLLGVLVEIRA) is a signal peptide. Cadherin domains lie at 60 to 164 (EQIL…PPSF), 165 to 273 (GTEQ…APVF), 274 to 378 (TQPE…APEV), 379 to 483 (TVTS…PPTF), 484 to 598 (PHAS…YPTF), and 601 to 713 (DGST…KPSA). The Extracellular portion of the chain corresponds to 60–723 (EQILYSVFEE…DPDDSGLTLY (664 aa)). Residues asparagine 450 and asparagine 576 are each glycosylated (N-linked (GlcNAc...) asparagine). A helical membrane pass occupies residues 724–744 (LVVAVAAVSCVFLAFVTVLLA). Residues 745-962 (LKLRRWHKSR…KKKSGKKEKK (218 aa)) are Cytoplasmic-facing. 2 disordered regions span residues 832-871 (KGDP…WPNN) and 932-962 (ATLT…KEKK). Polar residues predominate over residues 836–871 (NLQQAPPNTDWRFSQAQRPGTSGSQNGDDTGTWPNN). Positions 952-962 (NKKKSGKKEKK) are enriched in basic residues.

It localises to the cell membrane. Its function is as follows. Potential calcium-dependent cell-adhesion protein. May be involved in the establishment and maintenance of specific neuronal connections in the brain. The sequence is that of Protocadherin gamma-A4 (PCDHGA4) from Homo sapiens (Human).